The primary structure comprises 835 residues: Ribonuclease R (835 aa).

The 327-residue stretch at 267–593 (RVDLRELPLV…LLHRAIKYLI (327 aa)) folds into the RNB domain. Positions 652 to 733 (GDELEGVIAN…DDKQIDFELV (82 aa)) constitute an S1 motif domain. Positions 739–754 (LRGEGKTAKKRAAEAK) are enriched in basic and acidic residues. Residues 739–835 (LRGEGKTAKK…KTKRTKQDAQ (97 aa)) form a disordered region. Over residues 755–764 (RKAKEKKRAA) the composition is skewed to basic residues. Residues 765 to 777 (TRSSSKESATARA) show a composition bias toward low complexity. The span at 783-793 (PTKRPEQTDSG) shows a compositional bias: basic and acidic residues. Residues 809–829 (KPKVKKAHKKKPHSKPKKTKR) are compositionally biased toward basic residues.

The protein belongs to the RNR ribonuclease family. RNase R subfamily.

The protein resides in the cytoplasm. It catalyses the reaction Exonucleolytic cleavage in the 3'- to 5'-direction to yield nucleoside 5'-phosphates.. In terms of biological role, 3'-5' exoribonuclease that releases 5'-nucleoside monophosphates and is involved in maturation of structured RNAs. The chain is Ribonuclease R from Vibrio parahaemolyticus serotype O3:K6 (strain RIMD 2210633).